Reading from the N-terminus, the 219-residue chain is Counting factor-associated protein C (219 aa).

A signal peptide spans 1–16 (MKVLILLVSLISVCFS). 2 N-linked (GlcNAc...) asparagine glycosylation sites follow: N74 and N123.

Its subcellular location is the secreted. The polypeptide is Counting factor-associated protein C (cfaC) (Dictyostelium discoideum (Social amoeba)).